Consider the following 572-residue polypeptide: Transmembrane glycoprotein NMB (572 aa).

Residues 1–22 (MECLYYFLGFLLLAARLPLDAA) form the signal peptide. The Extracellular segment spans residues 23 to 498 (KRFHDVLGNE…DPASPLRMAN (476 aa)). The Cell attachment site signature appears at 64 to 66 (RGD). Residues asparagine 93, asparagine 134, asparagine 146, asparagine 200, asparagine 249, asparagine 275, asparagine 296, asparagine 300, asparagine 306, and asparagine 312 are each glycosylated (N-linked (GlcNAc...) asparagine). Positions 240–327 (VTMFQKNDRN…AAPGPCPPPP (88 aa)) constitute a PKD domain. The disordered stretch occupies residues 320–362 (PGPCPPPPPPPRPSKPTPSLATTLKSYDSNTPGPAGDNPLELS). Residues 321 to 335 (GPCPPPPPPPRPSKP) are compositionally biased toward pro residues. The span at 338 to 351 (SLATTLKSYDSNTP) shows a compositional bias: polar residues. N-linked (GlcNAc...) asparagine glycans are attached at residues asparagine 459 and asparagine 467. The chain crosses the membrane as a helical span at residues 499–519 (SALISVGCLAIFVTVISLLVY). At 520-572 (KKHKEYNPIENSPGNVVRSKGLSVFLNRAKAVFFPGNQEKDPLLKNQEFKGVS) the chain is on the cytoplasmic side. Serine 542 carries the phosphoserine modification.

Belongs to the PMEL/NMB family. In terms of tissue distribution, widely expressed, but very low expression, if any, in the brain. Expressed in the epidermis with higher levels in melanocytes compared with keratinocytes and Langerhans cells (at protein level). Expressed in peripheral blood, but not bone marrow mononuclear cells. Expressed in tissue macrophages, including liver Kuppfer cells and lung alveolar macrophages, in podocytes and in some cells of the ciliary body of the eye (at protein level). May be overexpressed in various cancers, including melanoma and glioblastoma multiforme.

The protein resides in the cell membrane. It localises to the melanosome membrane. It is found in the early endosome membrane. Functionally, could be a melanogenic enzyme. The chain is Transmembrane glycoprotein NMB (GPNMB) from Homo sapiens (Human).